A 341-amino-acid polypeptide reads, in one-letter code: MSSAAMVKAEDSLEPTLQNLLDQKTLRWVFVGGKGGVGKTTTSCSLAIQLAKVRKSVLLISTDPAHNLSDAFGQKFGKEARLIDGFTNLSAMEIDPNGSIQDLLAAGGGQGDDSMGGLGIGGMMQDLAFSIPGVDEAMSFAEVLKQVKSLSYEVIIFDTAPTGHTLRFLQFPTVLEKALAKLAQLSTQFGPMLNSILGGRGGLPGGQNLDEILSKMESLRETIAEVNAQFKDADLTTFVCVCIAEFLSLYETERMIQELTSYHIDTHCIVVNQLLFPGKDSSCEQCKARRKMQKKYLNEIEELYEDFNVVRMPMLVEEVRGKEKLEKFSDMLIHPYVPPQE.

34–41 (KGGVGKTT) serves as a coordination point for ATP. Asp63 is an active-site residue. 2 residues coordinate ATP: Glu245 and Asn272. Zn(2+) contacts are provided by Cys283 and Cys286.

Belongs to the arsA ATPase family. As to quaternary structure, homodimer.

It localises to the cytoplasm. The protein resides in the endoplasmic reticulum. In terms of biological role, ATPase required for the post-translational delivery of tail-anchored (TA) proteins to the endoplasmic reticulum. Recognizes and selectively binds the transmembrane domain of TA proteins in the cytosol. This complex then targets to the endoplasmic reticulum by membrane-bound receptors, where the tail-anchored protein is released for insertion. This process is regulated by ATP binding and hydrolysis. ATP binding drives the homodimer towards the closed dimer state, facilitating recognition of newly synthesized TA membrane proteins. ATP hydrolysis is required for insertion. Subsequently, the homodimer reverts towards the open dimer state, lowering its affinity for the membrane-bound receptor, and returning it to the cytosol to initiate a new round of targeting. The protein is ATPase GET3 of Paracoccidioides brasiliensis (strain Pb18).